A 162-amino-acid chain; its full sequence is uncharacterized protein (162 aa).

The stretch at 129-161 (DLNAVLKNLKEVEKKSLKISKEELKKKLDQILG) forms a coiled coil.

This is an uncharacterized protein from Aquifex aeolicus (strain VF5).